The following is a 386-amino-acid chain: Putative aminotransferase YugH (386 aa).

An N6-(pyridoxal phosphate)lysine modification is found at lysine 234.

Belongs to the class-I pyridoxal-phosphate-dependent aminotransferase family. It depends on pyridoxal 5'-phosphate as a cofactor.

Its subcellular location is the cytoplasm. In Bacillus subtilis (strain 168), this protein is Putative aminotransferase YugH (yugH).